Reading from the N-terminus, the 276-residue chain is uncharacterized protein (276 aa).

The interval 1 to 70 (MSKAKSPIKS…SDDDEEDSPN (70 aa)) is disordered. A compositionally biased stretch (basic and acidic residues) spans 21–35 (VLREKKVKDAEKAEH). The RRM domain occupies 105-183 (GVLYVGRLPH…KLLQCKVIPE (79 aa)). The interval 249–276 (VSHPKAASPVASKKSSKKKNKKVLAAHK) is disordered. Over residues 252–261 (PKAASPVASK) the composition is skewed to low complexity. Positions 262-276 (KSSKKKNKKVLAAHK) are enriched in basic residues.

It localises to the nucleus. The protein resides in the nucleolus. This is an uncharacterized protein from Schizosaccharomyces pombe (strain 972 / ATCC 24843) (Fission yeast).